The chain runs to 78 residues: Large ribosomal subunit protein bL28 (78 aa).

Residues 1 to 24 are disordered; sequence MSRVCQVTGKRPAVGNNRSHANNA.

Belongs to the bacterial ribosomal protein bL28 family.

The chain is Large ribosomal subunit protein bL28 from Aeromonas salmonicida (strain A449).